A 48-amino-acid chain; its full sequence is Small, acid-soluble spore protein P (48 aa).

The segment covering methionine 1 to lysine 12 has biased composition (basic and acidic residues). The disordered stretch occupies residues methionine 1–methionine 48. Residues lysine 30–methionine 48 are compositionally biased toward basic residues.

The protein belongs to the SspP family.

The protein resides in the spore core. In Bacillus velezensis (strain DSM 23117 / BGSC 10A6 / LMG 26770 / FZB42) (Bacillus amyloliquefaciens subsp. plantarum), this protein is Small, acid-soluble spore protein P.